Here is a 632-residue protein sequence, read N- to C-terminus: MLVSSHLERLLVFVFEFIFIEIGFPPCTPRPVSTSSKGVTIESSHSDMATSSLHFASCDTQQAPRQRGASTVNSSSSTKVDLKSGLEECAVALNLFLSNKFTDALELLRPWAKESMYHALGYSTIVVLQAVLTFEQQDIQNGISAMKDALQTCQKYRKKYTVVESFSSLLSRGSLEQLSEEEMHAEICYAECLLQKAALTFVQDENMINFIKGGLKIRTSYQIYKECLSILHEIQKNKLQQEFFYEFEGGVKLGTGAFNLMLSLLPARIIRLLEFIGFSGNRELGLLQLREGASGKSMRSALCCLTILAFHTYISLILGTGEVNVAEAERLLAPFLQQFPNGSLVLFYHARIELLKGNLEEAQEVFRKCVSVQEEWKQFHHLCYWELMWINVFQQNWMQAYYYSDLLCKESKWSKATYVFLKAAILSMLPEEDVVATNENVVTLFRQVDSLKQRIAGKSLPTEKFAVRKARRYSASLPAPVKLILPALEMMYVWNGFSIVSKRKDLSENLLVTVEKAEAALQSQNFNSFSVDDECLVKLLKGCCLKNLQRPLQAELCYNHVVESEKLLKYDHYLVPFTLFELASLYKSQGEIDKAIKFLETARNNYKDYSLESRLHFRIQAALHLWRKPSSD.

3 TPR repeats span residues 343–376, 535–568, and 576–609; these read SLVL…QEEW, CLVK…EKLL, and PFTL…YKDY.

Belongs to the TTC39 family.

Regulates high density lipoprotein (HDL) cholesterol metabolism by promoting the ubiquitination and degradation of the oxysterols receptors LXR (NR1H2 and NR1H3). The chain is Tetratricopeptide repeat protein 39B (TTC39B) from Macaca fascicularis (Crab-eating macaque).